Here is a 314-residue protein sequence, read N- to C-terminus: MIEFEKPKIHKIDENDNYGRFVIEPLERGYGTTLGNSLRRILLSSLPGAAITSVQIDSVLHEFSTIEGVVEDVTQIILNLKKVSLKIESDEDKTLEINVAGPANVTAGDIMGDGDVVILNPELPICTVAEGTTFHAVLTADTGRGYTSADENKARKVDMPIGVLPIDSIYTPIERVNYQVENTRVGQRDDYDKLTLDIWTDGSITPSEATSLSAKILTEHLAIFVNLNDQAKETEIMVEKEETHKEKMLEMTIEELDLSVRSYNCLKRAGINSVQELTDRTDAQMMKVRNLGRKSLVEIQEKLSLLGLGFRSED.

The tract at residues 1 to 228 (MIEFEKPKIH…EHLAIFVNLN (228 aa)) is alpha N-terminal domain (alpha-NTD). The segment at 245 to 314 (KEKMLEMTIE…LLGLGFRSED (70 aa)) is alpha C-terminal domain (alpha-CTD).

The protein belongs to the RNA polymerase alpha chain family. As to quaternary structure, homodimer. The RNAP catalytic core consists of 2 alpha, 1 beta, 1 beta' and 1 omega subunit. When a sigma factor is associated with the core the holoenzyme is formed, which can initiate transcription.

It catalyses the reaction RNA(n) + a ribonucleoside 5'-triphosphate = RNA(n+1) + diphosphate. In terms of biological role, DNA-dependent RNA polymerase catalyzes the transcription of DNA into RNA using the four ribonucleoside triphosphates as substrates. The chain is DNA-directed RNA polymerase subunit alpha from Pediococcus pentosaceus (strain ATCC 25745 / CCUG 21536 / LMG 10740 / 183-1w).